A 159-amino-acid polypeptide reads, in one-letter code: SsrA-binding protein (159 aa).

Positions 133 to 147 are enriched in basic and acidic residues; that stretch reads KRQDLAKRDAQREMA. Residues 133–159 are disordered; that stretch reads KRQDLAKRDAQREMARAAGRRSKGMDD. A compositionally biased stretch (basic residues) spans 150 to 159; the sequence is AGRRSKGMDD.

This sequence belongs to the SmpB family.

It localises to the cytoplasm. Required for rescue of stalled ribosomes mediated by trans-translation. Binds to transfer-messenger RNA (tmRNA), required for stable association of tmRNA with ribosomes. tmRNA and SmpB together mimic tRNA shape, replacing the anticodon stem-loop with SmpB. tmRNA is encoded by the ssrA gene; the 2 termini fold to resemble tRNA(Ala) and it encodes a 'tag peptide', a short internal open reading frame. During trans-translation Ala-aminoacylated tmRNA acts like a tRNA, entering the A-site of stalled ribosomes, displacing the stalled mRNA. The ribosome then switches to translate the ORF on the tmRNA; the nascent peptide is terminated with the 'tag peptide' encoded by the tmRNA and targeted for degradation. The ribosome is freed to recommence translation, which seems to be the essential function of trans-translation. In Salinispora arenicola (strain CNS-205), this protein is SsrA-binding protein.